The chain runs to 454 residues: tRNA modification GTPase MnmE (454 aa).

Residues Arg-23, Glu-80, and Lys-120 each contribute to the (6S)-5-formyl-5,6,7,8-tetrahydrofolate site. Positions 216–377 (GMKVVIAGRP…LRNHLKQSMG (162 aa)) constitute a TrmE-type G domain. Residue Asn-226 participates in K(+) binding. Residues 226–231 (NAGKSS), 245–251 (TDIAGTT), 270–273 (DTAG), 335–338 (NKAD), and 358–360 (SAR) contribute to the GTP site. Residue Ser-230 participates in Mg(2+) binding. The K(+) site is built by Thr-245, Ile-247, and Thr-250. Thr-251 is a Mg(2+) binding site. Residue Lys-454 participates in (6S)-5-formyl-5,6,7,8-tetrahydrofolate binding.

It belongs to the TRAFAC class TrmE-Era-EngA-EngB-Septin-like GTPase superfamily. TrmE GTPase family. As to quaternary structure, homodimer. Heterotetramer of two MnmE and two MnmG subunits. The cofactor is K(+).

The protein resides in the cytoplasm. In terms of biological role, exhibits a very high intrinsic GTPase hydrolysis rate. Involved in the addition of a carboxymethylaminomethyl (cmnm) group at the wobble position (U34) of certain tRNAs, forming tRNA-cmnm(5)s(2)U34. This chain is tRNA modification GTPase MnmE, found in Salmonella paratyphi C (strain RKS4594).